The sequence spans 150 residues: MKAKINFLNQSRIKFKYLKLFRKIFKLLVEKEQITGEISLDLMLITQRKAQKLAIKFKNINYIPDVLSFPSNLIIAKKNFRLHFLGEIFMTPAKIIKQANEYGHSEEREFSYLFVHSIYHLLGFDHQDEKTNKLMDEKVENILINLGINR.

Zn(2+) contacts are provided by H116, H120, and H126.

This sequence belongs to the endoribonuclease YbeY family. The cofactor is Zn(2+).

It is found in the cytoplasm. In terms of biological role, single strand-specific metallo-endoribonuclease involved in late-stage 70S ribosome quality control and in maturation of the 3' terminus of the 16S rRNA. The chain is Endoribonuclease YbeY from Mesomycoplasma hyopneumoniae (strain 232) (Mycoplasma hyopneumoniae).